The primary structure comprises 535 residues: Probable cytochrome P450 12b2, mitochondrial (535 aa).

Residue C479 coordinates heme.

This sequence belongs to the cytochrome P450 family. Heme serves as cofactor.

Its subcellular location is the mitochondrion membrane. In Drosophila melanogaster (Fruit fly), this protein is Probable cytochrome P450 12b2, mitochondrial (Cyp12b2).